The sequence spans 793 residues: Alanine--tRNA ligase, mitochondrial (793 aa).

Residues Arg88, Trp187, and 224 to 226 (IWN) contribute to the ATP site. Residues Asn226 and Asp249 each contribute to the L-alanine site. Residue Gly253 participates in ATP binding. 4 residues coordinate Zn(2+): His594, His598, Cys706, and His710.

This sequence belongs to the class-II aminoacyl-tRNA synthetase family. Monomer. It depends on Zn(2+) as a cofactor.

It is found in the mitochondrion. It carries out the reaction tRNA(Ala) + L-alanine + ATP = L-alanyl-tRNA(Ala) + AMP + diphosphate. Its function is as follows. Catalyzes the attachment of alanine to tRNA(Ala) in a two-step reaction: alanine is first activated by ATP to form Ala-AMP and then transferred to the acceptor end of tRNA(Ala). Also edits incorrectly charged tRNA(Ala) via its editing domain. The polypeptide is Alanine--tRNA ligase, mitochondrial (Caenorhabditis elegans).